The primary structure comprises 241 residues: Tetrahydromethanopterin S-methyltransferase subunit A (241 aa).

Over 1-220 (MAEKKEPAEG…HSGVLAGKIE (220 aa)) the chain is Cytoplasmic. Histidine 85 is a binding site for 5-hydroxybenzimidazolylcob(I)amide. The chain crosses the membrane as a helical span at residues 221-241 (GIMVGLVLSLFVLGLLLFGGM).

This sequence belongs to the MtrA family. In terms of assembly, the complex is composed of 8 subunits; MtrA, MtrB, MtrC, MtrD, MtrE, MtrF, MtrG and MtrH. 5-hydroxybenzimidazolylcob(I)amide is required as a cofactor.

The protein resides in the cell membrane. The catalysed reaction is 5-methyl-5,6,7,8-tetrahydromethanopterin + coenzyme M + 2 Na(+)(in) = 5,6,7,8-tetrahydromethanopterin + methyl-coenzyme M + 2 Na(+)(out). It functions in the pathway one-carbon metabolism; methanogenesis from CO(2); methyl-coenzyme M from 5,10-methylene-5,6,7,8-tetrahydromethanopterin: step 2/2. In terms of biological role, part of a complex that catalyzes the formation of methyl-coenzyme M and tetrahydromethanopterin from coenzyme M and methyl-tetrahydromethanopterin. This is an energy-conserving, sodium-ion translocating step. The chain is Tetrahydromethanopterin S-methyltransferase subunit A from Methanohalobium evestigatum (strain ATCC BAA-1072 / DSM 3721 / NBRC 107634 / OCM 161 / Z-7303).